Here is an 848-residue protein sequence, read N- to C-terminus: Beta-galactosidase 13 (848 aa).

An N-terminal signal peptide occupies residues 1–27 (MKIHSSDHSWLLLAVLVILLSFSGALS). An N-linked (GlcNAc...) asparagine glycan is attached at Asn-107. Glu-200 functions as the Proton donor in the catalytic mechanism. Glu-271 functions as the Nucleophile in the catalytic mechanism. N-linked (GlcNAc...) asparagine glycosylation is found at Asn-272, Asn-303, Asn-376, Asn-398, Asn-782, Asn-787, and Asn-817. The SUEL-type lectin domain occupies 754–843 (DDVHLTANLK…KKLAVQVKCG (90 aa)).

Belongs to the glycosyl hydrolase 35 family. As to expression, ubiquitous, with higher expression levels in roots, flowers and siliques.

The protein localises to the secreted. Its subcellular location is the extracellular space. It localises to the apoplast. The enzyme catalyses Hydrolysis of terminal non-reducing beta-D-galactose residues in beta-D-galactosides.. This chain is Beta-galactosidase 13 (BGAL13), found in Arabidopsis thaliana (Mouse-ear cress).